Reading from the N-terminus, the 62-residue chain is Protein UL148D (62 aa).

A helical membrane pass occupies residues 30 to 50 (WWISVAIVIFIGVCLVALMYF).

It localises to the host membrane. The protein is Protein UL148D (UL148D) of Human cytomegalovirus (strain Merlin) (HHV-5).